The chain runs to 34 residues: Cytochrome b6-f complex subunit 8 (34 aa).

A helical membrane pass occupies residues 3-23 (IFQIGWAALAAIFTFSIAMVV).

Belongs to the PetN family. As to quaternary structure, the 4 large subunits of the cytochrome b6-f complex are cytochrome b6, subunit IV (17 kDa polypeptide, PetD), cytochrome f and the Rieske protein, while the 4 small subunits are PetG, PetL, PetM and PetN. The complex functions as a dimer.

It localises to the cellular thylakoid membrane. Its function is as follows. Component of the cytochrome b6-f complex, which mediates electron transfer between photosystem II (PSII) and photosystem I (PSI), cyclic electron flow around PSI, and state transitions. The chain is Cytochrome b6-f complex subunit 8 from Prochlorococcus marinus subsp. pastoris (strain CCMP1986 / NIES-2087 / MED4).